Consider the following 230-residue polypeptide: Ephrin-A3 (230 aa).

An N-terminal signal peptide occupies residues 1–22; it reads MAAAPLLLLLLLVPVPLLPLLA. Residues 30 to 161 enclose the Ephrin RBD domain; the sequence is GNRHAVYWNS…RMKVFVCCAS (132 aa). N-linked (GlcNAc...) asparagine glycosylation is found at Asn38, Asn67, Asn84, and Asn92. Disulfide bonds link Cys63-Cys102 and Cys91-Cys150. Gly206 carries GPI-anchor amidated glycine lipidation. Positions 207–230 are cleaved as a propeptide — removed in mature form; sequence TSPKREHLPLAVGIAFFLMTLLAS.

It belongs to the ephrin family. As to quaternary structure, interacts with EPHA8; activates EPHA8. Expressed in myogenic progenitor cells.

It is found in the cell membrane. Functionally, cell surface GPI-bound ligand for Eph receptors, a family of receptor tyrosine kinases which are crucial for migration, repulsion and adhesion during neuronal, vascular and epithelial development. Binds promiscuously Eph receptors residing on adjacent cells, leading to contact-dependent bidirectional signaling into neighboring cells. The signaling pathway downstream of the receptor is referred to as forward signaling while the signaling pathway downstream of the ephrin ligand is referred to as reverse signaling. The protein is Ephrin-A3 (Efna3) of Mus musculus (Mouse).